Consider the following 1143-residue polypeptide: uncharacterized protein (1143 aa).

The signal sequence occupies residues 1–20 (MKLLLLALILVLSNINLISG). The Extracellular segment spans residues 21–1121 (NGLVWPHPRL…PAAGGEDSSA (1101 aa)). Positions 177–203 (NSGGSWSSGGSGNSGGGWSSGGSGNSG) are enriched in gly residues. Residues 177–1120 (NSGGSWSSGG…EPAAGGEDSS (944 aa)) are disordered. A compositionally biased stretch (low complexity) spans 222–236 (SSGGWTSGSHSSGSW). Residues 237-283 (SSGGGSGSSSGGQSSGSWSSGGGSSSGGHSSGSWSSGGGSSAGGGSS) show a composition bias toward gly residues. Residues 284–296 (SGSHSSGSWSSGG) are compositionally biased toward low complexity. Positions 297 to 330 (SSSGGQSSGSWSSGGGSSSGGQSSGSWSSGGGSS) are enriched in gly residues. Residues 331–368 (SGSHSSGSWSSGGSSSGSHSSGSWSSGGSSSSSGNSGW) are compositionally biased toward low complexity. The span at 374–392 (GNTGGNTGGNTGGNTGGQS) shows a compositional bias: gly residues. A compositionally biased stretch (low complexity) spans 393-403 (SGNSGWMTASG). Composition is skewed to gly residues over residues 404-418 (GNTG…GGQS) and 430-444 (GNTG…GGQS). 2 stretches are compositionally biased toward low complexity: residues 445-498 (SGSS…TSSG) and 506-541 (GSSS…SSGD). Gly residues-rich tracts occupy residues 555-573 (GNTG…GGNS), 580-596 (GNSG…GGNS), 604-622 (GNTG…GGNS), 629-783 (GNSG…GGNS), 790-843 (GNSG…GGAS), and 851-905 (GNSG…GGNS). Positions 906-1059 (GAATGANSGA…GGNGASGAAN (154 aa)) are enriched in low complexity. Over residues 1062–1078 (SIVTPNDQNVSPLSNSD) the composition is skewed to polar residues. The segment covering 1094-1114 (PTSRAPTVTPTPTSSAEEPAA) has biased composition (low complexity). The chain crosses the membrane as a helical span at residues 1122–1142 (ISKYSIQSFGIFVLSMIIYLV). I1143 is a topological domain (cytoplasmic).

The protein resides in the membrane. This is an uncharacterized protein from Dictyostelium discoideum (Social amoeba).